A 292-amino-acid polypeptide reads, in one-letter code: 4-diphosphocytidyl-2-C-methyl-D-erythritol kinase (292 aa).

Lys11 is an active-site residue. 95–105 (PVSAGLAGGSS) serves as a coordination point for ATP. The active site involves Asp137.

It belongs to the GHMP kinase family. IspE subfamily.

It carries out the reaction 4-CDP-2-C-methyl-D-erythritol + ATP = 4-CDP-2-C-methyl-D-erythritol 2-phosphate + ADP + H(+). Its pathway is isoprenoid biosynthesis; isopentenyl diphosphate biosynthesis via DXP pathway; isopentenyl diphosphate from 1-deoxy-D-xylulose 5-phosphate: step 3/6. Functionally, catalyzes the phosphorylation of the position 2 hydroxy group of 4-diphosphocytidyl-2C-methyl-D-erythritol. The protein is 4-diphosphocytidyl-2-C-methyl-D-erythritol kinase of Alkaliphilus oremlandii (strain OhILAs) (Clostridium oremlandii (strain OhILAs)).